We begin with the raw amino-acid sequence, 154 residues long: Small ribosomal subunit protein eS10 (154 aa).

Residues Ala-91 to Asn-154 are disordered. Basic and acidic residues predominate over residues Arg-124–Gly-135.

The protein belongs to the eukaryotic ribosomal protein eS10 family.

The protein resides in the cytoplasm. In Dictyostelium discoideum (Social amoeba), this protein is Small ribosomal subunit protein eS10 (rps10).